Here is a 617-residue protein sequence, read N- to C-terminus: Type VII secretion systems protein EssD (617 aa).

The tract at residues 420 to 448 (QNHVTHGPKDSMVRSEGKHSISSHEMNSS) is disordered. A compositionally biased stretch (basic and acidic residues) spans 426–438 (GPKDSMVRSEGKH).

The protein belongs to the EssD family. Interacts (via C-terminal) with EssG; this interaction blocks EssD activity. Interacts with EssE.

The protein localises to the secreted. Its subcellular location is the cell membrane. Component of the type VII secretion system (Ess). Plays a role in Ess secretion during infection. Required for the efficient secretion of EsxA. Required for abscess formation and staphylococcal persistence in host tissue. Possesses a toxic DNase activity that is modulated by EssG by forming a nuclease toxin-antitoxin pair. This nuclease toxin targets competitor bacteria. This is Type VII secretion systems protein EssD from Staphylococcus aureus (strain Newman).